The primary structure comprises 211 residues: uncharacterized protein (211 aa).

The next 6 helical transmembrane spans lie at 21–38, 53–75, 82–104, 124–146, 159–178, and 188–210; these read WYVI…ASEI, WGMD…YAAV, TAYL…MGVA, IFYA…AANV, PLLI…YWVY, and AVSF…LMEW.

The protein localises to the cell membrane. This is an uncharacterized protein from Archaeoglobus fulgidus (strain ATCC 49558 / DSM 4304 / JCM 9628 / NBRC 100126 / VC-16).